The chain runs to 128 residues: Large ribosomal subunit protein bL17 (128 aa).

Belongs to the bacterial ribosomal protein bL17 family. As to quaternary structure, part of the 50S ribosomal subunit. Contacts protein L32.

This is Large ribosomal subunit protein bL17 from Vibrio cholerae serotype O1 (strain ATCC 39541 / Classical Ogawa 395 / O395).